We begin with the raw amino-acid sequence, 430 residues long: Histidine--tRNA ligase (430 aa).

It belongs to the class-II aminoacyl-tRNA synthetase family. As to quaternary structure, homodimer.

It localises to the cytoplasm. The enzyme catalyses tRNA(His) + L-histidine + ATP = L-histidyl-tRNA(His) + AMP + diphosphate + H(+). This chain is Histidine--tRNA ligase, found in Acaryochloris marina (strain MBIC 11017).